The primary structure comprises 967 residues: Transmembrane channel-like protein 5 (967 aa).

4 stretches are compositionally biased toward polar residues: residues 1 to 10 (MSSFHQNSSY), 21 to 31 (GSRNHTHNYLE), 53 to 62 (NPHSSGSRTN), and 168 to 184 (QDNSYYHSGSRPHSNLP). The segment at 1 to 240 (MSSFHQNSSY…EEGDGYSSSK (240 aa)) is disordered. At 1–420 (MSSFHQNSSY…YFSFLRWLLK (420 aa)) the chain is on the extracellular side. The chain crosses the membrane as a helical span at residues 421 to 441 (FNIFSFVMNFSFIIIPQFTVG). Residues 442–449 (AKNTLQFT) lie on the Cytoplasmic side of the membrane. Residues 450–470 (GLEFFTGAGYFGDTVMYYGFY) traverse the membrane as a helical segment. Topologically, residues 471 to 487 (TNSTIRHRMGGASYNMQ) are extracellular. The helical transmembrane segment at 488–508 (LAYIFTIGACLVVCFFSLLFS) threads the bilayer. Residues 509–581 (MAKYFRNNFI…NQQLTRFSAH (73 aa)) lie on the Cytoplasmic side of the membrane. A helical membrane pass occupies residues 582–602 (VAAWLVSTGVTAACCVAVYYL). Topologically, residues 603–616 (AEYNSEFLKTHRNP) are extracellular. The chain crosses the membrane as a helical span at residues 617-637 (GAVLLLPFVVSCINLAVPRFY). Over 638–660 (SMFRLVERYEIPRQEVYVLLVRN) the chain is Cytoplasmic. A helical transmembrane segment spans residues 661 to 681 (IFLKISIVGILCYYWLNIVAL). The Extracellular segment spans residues 682 to 694 (SGEECWETLIGQD). Residues 695-715 (IYRLLLMDFVFSLADSLLGEF) traverse the membrane as a helical segment. Residues 716–749 (LRRLIGMKFTSLSLQEFDIARNVLELIYAQTLTW) lie on the Cytoplasmic side of the membrane. The chain crosses the membrane as a helical span at residues 750 to 770 (LGIFFCPLLPFIQMITLFIMF). Over 771–796 (YVKNVSLMMNFQPPSKAWRASQMITF) the chain is Extracellular. A helical transmembrane segment spans residues 797-817 (FIFLLFFPSFTGVLCTLAITI). The Cytoplasmic segment spans residues 818-861 (WRLKPSADCGPFRGLPSFIQSIYSWIDTLSRRPGYLWVVWIYQN). The helical transmembrane segment at 862-882 (LIGSVHFFFILTLIVLIITYL) threads the bilayer. The Extracellular segment spans residues 883-967 (YWQITEGRKV…RSAQEENPIA (85 aa)).

It belongs to the TMC family. Ubiquitously expressed.

It localises to the membrane. Probable component of an ion channel. Molecular function hasn't been characterized yet. In Mus musculus (Mouse), this protein is Transmembrane channel-like protein 5.